Reading from the N-terminus, the 1083-residue chain is DNA primase (1083 aa).

The CHC2-type zinc-finger motif lies at 1022–1061 (CLRYPHRGGRTAPRTFVSLRVDHHNRLCISLAQQCFATKC).

The protein belongs to the herpesviridae DNA primase family. In terms of assembly, associates with the helicase and the primase-associated factor to form the helicase-primase factor.

The protein resides in the host nucleus. Essential component of the helicase/primase complex. Unwinds the DNA at the replication forks and generates single-stranded DNA for both leading and lagging strand synthesis. The primase initiates primer synthesis and thereby produces large amount of short RNA primers on the lagging strand that the polymerase elongates using dNTPs. This Varicella-zoster virus (strain Oka vaccine) (HHV-3) protein is DNA primase.